A 140-amino-acid polypeptide reads, in one-letter code: FLYWCH family member 2 (140 aa).

2 disordered regions span residues 1–39 and 84–140; these read MPLP…PRKF and HPEA…GKSL. Ser-21 carries the phosphoserine modification. The span at 98–114 shows a compositional bias: basic and acidic residues; the sequence is PEQKRSRQDPGTDRTED. Residues 118–127 are compositionally biased toward low complexity; sequence AAGPPEAAGE.

This is FLYWCH family member 2 (FLYWCH2) from Homo sapiens (Human).